Here is a 243-residue protein sequence, read N- to C-terminus: Transmembrane protein 174 (243 aa).

The next 2 membrane-spanning stretches (helical) occupy residues 40–60 and 73–93; these read LLFS…MGWI and LLGP…VCKF.

As to quaternary structure, interacts with SLC34A1; regulates SLC34A1 internalization by PTH and FGF23.

It localises to the endoplasmic reticulum membrane. The protein resides in the apical cell membrane. Functionally, regulator of plasma phosphate homeostasis. Decreases serum inorganic phosphate (Pi) uptake by regulating the sodium-phosphate cotransporter SLC34A1 trafficking by PTH and FGF23 in the kidney. The chain is Transmembrane protein 174 (TMEM174) from Pongo abelii (Sumatran orangutan).